The chain runs to 76 residues: KANTR integral membrane protein (76 aa).

An N-terminal signal peptide occupies residues 1 to 25 (MSPFSLLILVICAFSLFFLINLTRG). Residues 26–34 (LSILLVFSK) lie on the Extracellular side of the membrane. The chain crosses the membrane as a helical span at residues 35 to 55 (NQLLALLLLSIVSLFSISLIS). The Cytoplasmic portion of the chain corresponds to 56-76 (ALIFFDLLPSTFFGFILLFFF).

It is found in the membrane. This is KANTR integral membrane protein from Homo sapiens (Human).